The following is a 484-amino-acid chain: Ankyrin repeat protein T5 (484 aa).

7 ANK repeats span residues 33-64 (MDDTPFSLYLTRYDCTLETLRLFLKRGVDVNG), 68-102 (TRTSPLCTVLSNKELGKEAETLAMCLIDAGADVNA), 106-138 (DGRYPLLCLLENDRINTTSFVKYMIDRGTLVCV), 142-173 (DGCGPIQTYLRSKNVVLETLHVLVRAGASIHD), 178-211 (YGFNILQCYMISHVRSSDVRILRFLAGQGVNSSQ), 251-280 (LDFTPINYCVIHNDRRTFDYLLEKGANPNV), and 284-313 (LGNSCLDLAVLNGNKYMTLRLLRKTITPDA).

This Rabbit fibroma virus (strain Kasza) (RFV) protein is Ankyrin repeat protein T5.